We begin with the raw amino-acid sequence, 118 residues long: uncharacterized protein (118 aa).

A disordered region spans residues 25–85 (AEQPGSGGIA…SSSSTPSRAR (61 aa)). Residues 71–83 (RPSASSSSSTPSR) are compositionally biased toward low complexity.

This is an uncharacterized protein from Azospirillum brasilense.